Here is a 442-residue protein sequence, read N- to C-terminus: Probable folate-biopterin transporter 7 (442 aa).

12 consecutive transmembrane segments (helical) span residues 23 to 43, 64 to 82, 87 to 107, 114 to 134, 158 to 178, 184 to 204, 241 to 261, 270 to 290, 302 to 322, 335 to 355, 379 to 399, and 410 to 430; these read LGFGFFVQGFRGFPWLGANFF, LPMVAKPIYGVVSDSVYFF, IPYIAVGALLQAISWLAIAFL, ILALSIYLLLSNLGASLVEVA, FVWMVSSLGGILGNLLGGIAI, QSTFLVFGILALLQFLVTINI, IAWIAVSTAVVPVLTGTMFFY, ASLLGISKVFGQIAMLLWGFA, KLLTAIQVTIAFFVISDLLFV, VYVLFFSGFLETLFYFKILPF, IALAFIVSGYLGIVLASFVGV, and GLAIEACCVGIPLILTSWIYD.

Belongs to the major facilitator superfamily. Folate-biopterin transporter (TC 2.A.71) family.

It is found in the membrane. Functionally, could mediate folate transport. This chain is Probable folate-biopterin transporter 7, found in Arabidopsis thaliana (Mouse-ear cress).